The primary structure comprises 233 residues: Pyridoxal phosphate homeostasis protein (233 aa).

At Lys-35 the chain carries N6-(pyridoxal phosphate)lysine.

The protein belongs to the pyridoxal phosphate-binding protein YggS/PROSC family.

Pyridoxal 5'-phosphate (PLP)-binding protein, which is involved in PLP homeostasis. The sequence is that of Pyridoxal phosphate homeostasis protein from Pasteurella multocida (strain Pm70).